Consider the following 338-residue polypeptide: Glyceraldehyde-3-phosphate dehydrogenase (338 aa).

NAD(+)-binding positions include 12 to 13 (RI), Asp34, and Arg79. Residues 150 to 152 (SCT), Thr181, 210 to 211 (TG), and Arg233 contribute to the D-glyceraldehyde 3-phosphate site. Cys151 acts as the Nucleophile in catalysis. Residue Asn315 participates in NAD(+) binding.

This sequence belongs to the glyceraldehyde-3-phosphate dehydrogenase family. In terms of assembly, homotetramer.

It localises to the cytoplasm. The enzyme catalyses D-glyceraldehyde 3-phosphate + phosphate + NAD(+) = (2R)-3-phospho-glyceroyl phosphate + NADH + H(+). It functions in the pathway carbohydrate degradation; glycolysis; pyruvate from D-glyceraldehyde 3-phosphate: step 1/5. The chain is Glyceraldehyde-3-phosphate dehydrogenase (gpd1) from Hypocrea atroviridis (Trichoderma atroviride).